An 864-amino-acid chain; its full sequence is MQYPFQEVESFWQKFWEENKSFQTNIRSSKPKFYCLDMFPYPSGAGLHVGHPEGYTATDILSRFKRMKGFEVLHPMGWDAFGLPAERYAMQTGIHPAITTKNNIDNFRRQIQMIGLSYDWSRELSTTDPDYYKFTQWIFIQLYQSWFNPELKKAESIETLIQRFSNKGSADLDYKPFSAQEWKQFSLVEKEKILSDFRLVYQAEIPVNWCEALGTVLANEEVEEWIDKGYEVVRKPMRQYMMRITAYADRLLEDLKLVQWPSSTLEMQKNWIGKSEGLEITFPFKKPLKSGSDGIRIFTTRPDTIFGVTYMVVAPEHPIVSEITTPEQKQKVEEYQKVSSLKSDLDRMELTKEKTGVFTGSFVLNPANPSKEIPIWISDYVLYGYGTGAIMAVPAHDQRDYEFAKTFGLEILPVIEGEITDVAFDSKTSICIHSSSSEISIDGLDYSSASSKIISWAESKRIGKKKTQFKLRDWLFARQRYWGEPIPLVHYPSGITKPIPESELPLELPPNLEEFKPSGTGESPLALAKEWLQYKDPETGEIGTRETNTMPQWAGSCWYYLRYIDPKNGKLFCDPDLEKKWMPVDLYVGGAEHAVLHLLYSRFWHKFLYDIGVVSTQEPFAKLIHQGLILGEDKRKMSKSLGNVINPDDVIRKYGADSLRLFEMFMGPLEMVKPWSTRGVEGVFRFLNRVWRLFHTGEGESFRLDEIEPTTEELKILHKTIQKVGEDIPNFSFNTAISQLMIFVNEFTPSDRRPKEVLETFILLLAPFAPHIAEELWKRSGNNKSLSTEKFPEADPQYLVESEILIVVQVNGKLRDEFKAPKDVSEADAISIAKNLDKIKGILDGKTIRKEIYVPGKLINLVIG.

The short motif at 40 to 51 (PYPSGAGLHVGH) is the 'HIGH' region element. Residues 636–640 (KMSKS) carry the 'KMSKS' region motif. Lys-639 contributes to the ATP binding site.

It belongs to the class-I aminoacyl-tRNA synthetase family.

It is found in the cytoplasm. The enzyme catalyses tRNA(Leu) + L-leucine + ATP = L-leucyl-tRNA(Leu) + AMP + diphosphate. This is Leucine--tRNA ligase from Leptospira borgpetersenii serovar Hardjo-bovis (strain JB197).